The chain runs to 333 residues: MFSQKTNYSHLFTFSIIFYVEIVTGILGNGFIALVNIMDWLKRRRISTADQILTALALTRLIYVWSVLICILLLFLCPHLSMRPEMFTAIGVIWVVDNHFSIWLATCLGVFYFLKIASFSNSLFLYLKWRVKKVVLMIILISLIFLMLNISSLGMYDHFSIDVYEGNMSYNLVDSTHFPRIFLFTNSSKVFLIANSSHVFLPINSLFMLIPFTVSLVAFFVLFLSLWKHHKKMQVNAKGPRDASTMAHTKALQIGFSFLLLYAIYLLFIITGILNLDLMRCIVILLFDHISGAVFSISHSFVLILGNSKLRQATLSVLPCLRCRSKDMDTVVF.

Residues 1-14 (MFSQKTNYSHLFTF) lie on the Extracellular side of the membrane. The helical transmembrane segment at 15–37 (SIIFYVEIVTGILGNGFIALVNI) threads the bilayer. At 38–57 (MDWLKRRRISTADQILTALA) the chain is on the cytoplasmic side. Residues 58–77 (LTRLIYVWSVLICILLLFLC) form a helical membrane-spanning segment. At 78–91 (PHLSMRPEMFTAIG) the chain is on the extracellular side. The helical transmembrane segment at 92–114 (VIWVVDNHFSIWLATCLGVFYFL) threads the bilayer. Residues 115 to 133 (KIASFSNSLFLYLKWRVKK) are Cytoplasmic-facing. Residues 134–156 (VVLMIILISLIFLMLNISSLGMY) traverse the membrane as a helical segment. At 157–204 (DHFSIDVYEGNMSYNLVDSTHFPRIFLFTNSSKVFLIANSSHVFLPIN) the chain is on the extracellular side. Residues Asn167, Asn186, and Asn195 are each glycosylated (N-linked (GlcNAc...) asparagine). A helical transmembrane segment spans residues 205-227 (SLFMLIPFTVSLVAFFVLFLSLW). Residues 228-250 (KHHKKMQVNAKGPRDASTMAHTK) lie on the Cytoplasmic side of the membrane. A helical membrane pass occupies residues 251–273 (ALQIGFSFLLLYAIYLLFIITGI). The Extracellular portion of the chain corresponds to 274–282 (LNLDLMRCI). The chain crosses the membrane as a helical span at residues 283-305 (VILLFDHISGAVFSISHSFVLIL). Residues 306–333 (GNSKLRQATLSVLPCLRCRSKDMDTVVF) are Cytoplasmic-facing.

The protein belongs to the G-protein coupled receptor T2R family. As to expression, expressed in subsets of taste receptor cells of the tongue and palate epithelium and exclusively in gustducin-positive cells. Expressed in the antrum and fundus (part of the stomach), duodenum and in gastric endocrine cells.

It localises to the membrane. In terms of biological role, gustducin-coupled receptor implicated in the perception of bitter compounds in the oral cavity and the gastrointestinal tract. Signals through PLCB2 and the calcium-regulated cation channel TRPM5. The polypeptide is Taste receptor type 2 member 123 (Tas2r123) (Rattus norvegicus (Rat)).